The primary structure comprises 196 residues: Guanylate kinase (196 aa).

The region spanning Arg7–Leu191 is the Guanylate kinase-like domain. Residue Gly14–Gly21 participates in ATP binding.

This sequence belongs to the guanylate kinase family.

It localises to the cytoplasm. It carries out the reaction GMP + ATP = GDP + ADP. Its function is as follows. Essential for recycling GMP and indirectly, cGMP. The chain is Guanylate kinase from Mycoplasmopsis pulmonis (strain UAB CTIP) (Mycoplasma pulmonis).